The chain runs to 173 residues: Protein FAM180A (173 aa).

The N-terminal stretch at 1 to 17 (MHWKMLLLLLLYYNAEA) is a signal peptide.

It belongs to the FAM180 family.

The protein localises to the secreted. This is Protein FAM180A (FAM180A) from Homo sapiens (Human).